The primary structure comprises 108 residues: Ig kappa chain V region K-25 (108 aa).

Residues 1–23 (AVELTQTPASVEAAVGGTVTIKC) are framework-1. The interval 24-34 (QASQBIYSYLS) is complementarity-determining-1. The framework-2 stretch occupies residues 35-49 (WYQQKPGQPPKLLIY). The complementarity-determining-2 stretch occupies residues 50 to 56 (KASTLAS). The tract at residues 57–88 (GVSSRFKGSGSGTEFTLTISDLZCADAATYYC) is framework-3. A complementarity-determining-3 region spans residues 89–97 (QTYSYSSTY). The interval 98–107 (FGGGTEVVVK) is framework-4.

The protein is Ig kappa chain V region K-25 of Oryctolagus cuniculus (Rabbit).